A 429-amino-acid polypeptide reads, in one-letter code: 3-phosphoshikimate 1-carboxyvinyltransferase (429 aa).

Residues Lys23, Ser24, and Arg28 each coordinate 3-phosphoshikimate. Residue Lys23 participates in phosphoenolpyruvate binding. Positions 95 and 123 each coordinate phosphoenolpyruvate. The 3-phosphoshikimate site is built by Ser168, Gln170, Asp316, and Lys343. Gln170 provides a ligand contact to phosphoenolpyruvate. Residue Asp316 is the Proton acceptor of the active site. Arg347 and Arg389 together coordinate phosphoenolpyruvate.

The protein belongs to the EPSP synthase family. Monomer.

The protein localises to the cytoplasm. It carries out the reaction 3-phosphoshikimate + phosphoenolpyruvate = 5-O-(1-carboxyvinyl)-3-phosphoshikimate + phosphate. It functions in the pathway metabolic intermediate biosynthesis; chorismate biosynthesis; chorismate from D-erythrose 4-phosphate and phosphoenolpyruvate: step 6/7. In terms of biological role, catalyzes the transfer of the enolpyruvyl moiety of phosphoenolpyruvate (PEP) to the 5-hydroxyl of shikimate-3-phosphate (S3P) to produce enolpyruvyl shikimate-3-phosphate and inorganic phosphate. This chain is 3-phosphoshikimate 1-carboxyvinyltransferase, found in Bacillus thuringiensis subsp. konkukian (strain 97-27).